Here is a 260-residue protein sequence, read N- to C-terminus: Thrombin-like enzyme acutobin (260 aa).

The signal sequence occupies residues 1–18 (MVLIRVLANLLILQLSYA). A propeptide spanning residues 19–24 (QKSSEL) is cleaved from the precursor. A Peptidase S1 domain is found at 25 to 251 (VIGGVECDIN…YNDWIRSITA (227 aa)). Cystine bridges form between Cys-31/Cys-165, Cys-52/Cys-68, Cys-102/Cys-258, Cys-144/Cys-212, Cys-176/Cys-191, and Cys-202/Cys-227. The Charge relay system role is filled by His-67. Asn-101 and Asn-105 each carry an N-linked (GlcNAc...) asparagine glycan. Asp-112 (charge relay system) is an active-site residue. Asn-124 carries N-linked (GlcNAc...) asparagine glycosylation. The active-site Charge relay system is Ser-206. An N-linked (GlcNAc...) asparagine glycan is attached at Asn-253.

Belongs to the peptidase S1 family. Snake venom subfamily. As to quaternary structure, monomer. N-glycosylated. Expressed by the venom gland.

The protein resides in the secreted. Thrombin-like snake venom serine protease that coagulates human fibrinogen by hydrolysis of the alpha chains (FGA). The chain is Thrombin-like enzyme acutobin from Deinagkistrodon acutus (Hundred-pace snake).